The sequence spans 560 residues: Membrane protein insertase YidC (560 aa).

Residues 7–27 traverse the membrane as a helical segment; sequence ILIVALAIVSYVMVLKWNQDY. The segment at 43–72 is disordered; the sequence is APAIPDTPLGNNASASADVPSANGETSAPL. A run of 4 helical transmembrane segments spans residues 367 to 387, 437 to 457, 468 to 488, and 515 to 535; these read IVGN…GIFF, LGGC…YWVL, FMLW…PIIM, and PIIF…YWVV.

This sequence belongs to the OXA1/ALB3/YidC family. Type 1 subfamily. Interacts with the Sec translocase complex via SecD. Specifically interacts with transmembrane segments of nascent integral membrane proteins during membrane integration.

It is found in the cell inner membrane. Required for the insertion and/or proper folding and/or complex formation of integral membrane proteins into the membrane. Involved in integration of membrane proteins that insert both dependently and independently of the Sec translocase complex, as well as at least some lipoproteins. Aids folding of multispanning membrane proteins. The sequence is that of Membrane protein insertase YidC from Pseudomonas fluorescens (strain SBW25).